Consider the following 427-residue polypeptide: Large ribosomal subunit protein uL4 (427 aa).

Position 2 is an N-acetylalanine (A2). K14 bears the N6-acetyllysine mark. R97 carries the post-translational modification Omega-N-methylarginine. K106 is modified (N6-acetyllysine). Residue K239 forms a Glycyl lysine isopeptide (Lys-Gly) (interchain with G-Cter in SUMO2) linkage. K259 is subject to N6-acetyllysine. Residue T266 is modified to Phosphothreonine. A phosphoserine mark is found at S290 and S295. Citrulline is present on R300. A Glycyl lysine isopeptide (Lys-Gly) (interchain with G-Cter in SUMO2) cross-link involves residue K327. N6-acetyllysine occurs at positions 333 and 353. K364 carries the N6-acetyllysine; alternate modification. A Glycyl lysine isopeptide (Lys-Gly) (interchain with G-Cter in SUMO1); alternate cross-link involves residue K364. At S365 the chain carries Phosphoserine. Positions 369–427 (AAVAGKKPVVGKKGKKAAVGVKKQKKPLVGKKAAATKKPAPEKKPAEKKPTTEEKKPAA) are disordered. Basic residues predominate over residues 377–397 (VVGKKGKKAAVGVKKQKKPLV). Residues 407–427 (PAPEKKPAEKKPTTEEKKPAA) are compositionally biased toward basic and acidic residues.

The protein belongs to the universal ribosomal protein uL4 family. As to quaternary structure, component of the large ribosomal subunit. May bind IPO9 with low affinity. Interacts with RBM3. In terms of processing, citrullinated by PADI4.

It localises to the cytoplasm. In terms of biological role, component of the large ribosomal subunit. The ribosome is a large ribonucleoprotein complex responsible for the synthesis of proteins in the cell. In Pongo abelii (Sumatran orangutan), this protein is Large ribosomal subunit protein uL4 (RPL4).